The primary structure comprises 473 residues: Glycosyl hydrolase family 109 protein 2 (473 aa).

A signal peptide (tat-type signal) is located at residues 1 to 31 (MSIFSSRRQFLKSLGLAAGAAAAGNALPGKA). Residues 77–78 (GR), Asp99, 148–151 (WSSH), 168–169 (EV), and Asn197 contribute to the NAD(+) site. Substrate contacts are provided by residues Tyr226, Arg244, 256 to 259 (YPTH), and Tyr339. Tyr256 is an NAD(+) binding site.

It belongs to the Gfo/Idh/MocA family. Glycosyl hydrolase 109 subfamily. NAD(+) serves as cofactor. Post-translationally, predicted to be exported by the Tat system. The position of the signal peptide cleavage has not been experimentally proven.

Functionally, glycosidase. The protein is Glycosyl hydrolase family 109 protein 2 of Akkermansia muciniphila (strain ATCC BAA-835 / DSM 22959 / JCM 33894 / BCRC 81048 / CCUG 64013 / CIP 107961 / Muc).